Consider the following 720-residue polypeptide: Probable ATP-dependent RNA helicase DHX35 (720 aa).

Residues 64–229 (LYLIENYQTV…FNQNETSDPA (166 aa)) form the Helicase ATP-binding domain. 77 to 84 (GETGCGKS) is a binding site for ATP. A DEAH box motif is present at residues 176–179 (DEAH). Residues 261-438 (TVETVVKIHQ…PVILQLKALG (178 aa)) enclose the Helicase C-terminal domain.

It belongs to the DEAD box helicase family. DEAH subfamily. In terms of assembly, identified in the spliceosome C complex.

The enzyme catalyses ATP + H2O = ADP + phosphate + H(+). Its function is as follows. May be involved in pre-mRNA splicing. This is Probable ATP-dependent RNA helicase DHX35 (DHX35) from Pongo abelii (Sumatran orangutan).